Reading from the N-terminus, the 126-residue chain is Glycine cleavage system H protein (126 aa).

Positions 21 to 103 (TVTIGISEHA…YEGGWIVKVK (83 aa)) constitute a Lipoyl-binding domain. Position 62 is an N6-lipoyllysine (lysine 62).

The protein belongs to the GcvH family. As to quaternary structure, the glycine cleavage system is composed of four proteins: P, T, L and H. It depends on (R)-lipoate as a cofactor.

In terms of biological role, the glycine cleavage system catalyzes the degradation of glycine. The H protein shuttles the methylamine group of glycine from the P protein to the T protein. The protein is Glycine cleavage system H protein of Vibrio parahaemolyticus serotype O3:K6 (strain RIMD 2210633).